The following is a 304-amino-acid chain: UDP-3-O-acyl-N-acetylglucosamine deacetylase (304 aa).

His77, His233, and Asp237 together coordinate Zn(2+). His260 (proton donor) is an active-site residue.

This sequence belongs to the LpxC family. It depends on Zn(2+) as a cofactor.

The enzyme catalyses a UDP-3-O-[(3R)-3-hydroxyacyl]-N-acetyl-alpha-D-glucosamine + H2O = a UDP-3-O-[(3R)-3-hydroxyacyl]-alpha-D-glucosamine + acetate. Its pathway is glycolipid biosynthesis; lipid IV(A) biosynthesis; lipid IV(A) from (3R)-3-hydroxytetradecanoyl-[acyl-carrier-protein] and UDP-N-acetyl-alpha-D-glucosamine: step 2/6. Its function is as follows. Catalyzes the hydrolysis of UDP-3-O-myristoyl-N-acetylglucosamine to form UDP-3-O-myristoylglucosamine and acetate, the committed step in lipid A biosynthesis. The sequence is that of UDP-3-O-acyl-N-acetylglucosamine deacetylase from Lawsonia intracellularis (strain PHE/MN1-00).